A 500-amino-acid chain; its full sequence is Carnosic acid synthase (500 aa).

The helical transmembrane segment at 4-24 threads the bilayer; that stretch reads LILLSLAFLASCVVAYSRRRP. C443 is a heme binding site.

The protein belongs to the cytochrome P450 family. It depends on heme as a cofactor. In terms of tissue distribution, mostly expressed in young leaves, particularly in glandular trichomes.

It is found in the membrane. It catalyses the reaction 11-hydroxyferruginol + 3 reduced [NADPH--hemoprotein reductase] + 3 O2 = carnosate + 3 oxidized [NADPH--hemoprotein reductase] + 4 H2O + 4 H(+). The enzyme catalyses miltiradiene + 2 reduced [NADPH--hemoprotein reductase] + 2 O2 = miltiradien-20-al + 2 oxidized [NADPH--hemoprotein reductase] + 3 H2O + 2 H(+). The catalysed reaction is ferruginol + 3 reduced [NADPH--hemoprotein reductase] + 3 O2 = pisiferate + 3 oxidized [NADPH--hemoprotein reductase] + 4 H2O + 4 H(+). It functions in the pathway secondary metabolite biosynthesis; terpenoid biosynthesis. In terms of biological role, monooxygenase involved in the biosynthesis of carnosate, a potent antioxidant labdane-related diterpene natural product. Catalyzes the oxidation of 11-hydroxyferruginol to produce carnosate. Mediates the conversion of miltiradien into miltiradien-20-al. Also involved in the production of pisiferic acid and derivative products from ferruginol. The chain is Carnosic acid synthase from Salvia fruticosa (Greek sage).